Here is a 340-residue protein sequence, read N- to C-terminus: NADH-quinone oxidoreductase subunit H 2 (340 aa).

Helical transmembrane passes span 10-30 (LIVAFGLIVFKVALLIAILLL), 84-104 (FLFKLAPILALAPPFVVFVAI), 126-146 (VALLFVFAVIGIEVFGVIFGG), 172-192 (MGFAVIGVVMLAQSMSLLDIV), 198-218 (VWNIVYQPVGFFVFFVAGLAE), 255-275 (VIVLLVSVLLVILFFGGWNGI), 279-299 (MPPLLWFLLKVAFFVYLFIWF), and 318-338 (VLLPLSMANIIITGVLLGAAA).

This sequence belongs to the complex I subunit 1 family. In terms of assembly, NDH-1 is composed of 14 different subunits. Subunits NuoA, H, J, K, L, M, N constitute the membrane sector of the complex.

The protein resides in the cell inner membrane. It catalyses the reaction a quinone + NADH + 5 H(+)(in) = a quinol + NAD(+) + 4 H(+)(out). Its function is as follows. NDH-1 shuttles electrons from NADH, via FMN and iron-sulfur (Fe-S) centers, to quinones in the respiratory chain. The immediate electron acceptor for the enzyme in this species is believed to be ubiquinone. Couples the redox reaction to proton translocation (for every two electrons transferred, four hydrogen ions are translocated across the cytoplasmic membrane), and thus conserves the redox energy in a proton gradient. This subunit may bind ubiquinone. The protein is NADH-quinone oxidoreductase subunit H 2 of Rhizobium etli (strain ATCC 51251 / DSM 11541 / JCM 21823 / NBRC 15573 / CFN 42).